A 176-amino-acid polypeptide reads, in one-letter code: MGPRVRVGVIVGVHGVRGAVRIKSFTEDPADIGFYSPVENEAGSIKYRLKVTGEVKGLVIATLDGIGDRDAAEALKGTELWVARERLPRLAEDEFLYSDLIGLVAEGVDGKRLGIVKAVADYGAGDVLDIKLEPKGDMMVPFTQASVPEVDIAGGRLVVVPPVYAPDENEEKSGGA.

The PRC barrel domain maps to 92–165; it reads EDEFLYSDLI…RLVVVPPVYA (74 aa).

This sequence belongs to the RimM family. In terms of assembly, binds ribosomal protein uS19.

The protein resides in the cytoplasm. In terms of biological role, an accessory protein needed during the final step in the assembly of 30S ribosomal subunit, possibly for assembly of the head region. Essential for efficient processing of 16S rRNA. May be needed both before and after RbfA during the maturation of 16S rRNA. It has affinity for free ribosomal 30S subunits but not for 70S ribosomes. In Paramagnetospirillum magneticum (strain ATCC 700264 / AMB-1) (Magnetospirillum magneticum), this protein is Ribosome maturation factor RimM.